Here is a 475-residue protein sequence, read N- to C-terminus: MTTILTYPFKNLPTASKWALRFSIRPLSCSSQLRAAPAVQTKTKKTLAKPNIRNVVVVDGVRTPFLLSGTSYKDLMPHDLARAALTGLLHRTSVPKEVVDYIIFGTVIQEVKTSNVAREAALGAGFSDKTPAHTVTMACISANQAMTTGVGLIASGQCDVIVAGGVELMSDVPIRHSRKMRKLMLDLNKAKSMGQRLSLISKFRFNFLAPELPAVSEFSTSETMGHSADRLAAAFAVSRLEQDEYALRSHSLAKKAQDEGLLSDVVPFKVPGKDTVTKDNGIRPSSLEQMAKLKPAFIKPYGTVTAANSSFLTDGASAMLIMAEEKALAMGYKPKAYLRDFMYVSQDPKDQLLLGPTYATPKVLEKAGLTMNDIDAFEFHEAFSGQILANFKAMDSDWFAENYMGRKTKVGLPPLEKFNNWGGSLSLGHPFGATGCRLVMAAANRLRKEGGQYGLVAACAAGGQGHAMIVEAYPK.

The N-terminal 34 residues, 1–34, are a transit peptide targeting the mitochondrion; the sequence is MTTILTYPFKNLPTASKWALRFSIRPLSCSSQLR. Lysine 73 is modified (N6-acetyllysine; alternate). At lysine 73 the chain carries N6-succinyllysine; alternate. The Acyl-thioester intermediate role is filled by cysteine 139. The stretch at 174–221 is an intramembrane region; it reads IRHSRKMRKLMLDLNKAKSMGQRLSLISKFRFNFLAPELPAVSEFSTS. Lysine 189 is subject to N6-acetyllysine; alternate. Lysine 189 carries the post-translational modification N6-succinyllysine; alternate. 3 positions are modified to N6-succinyllysine: lysine 191, lysine 273, and lysine 292. Lysine 294 is modified (N6-acetyllysine; alternate). Lysine 294 carries the post-translational modification N6-succinyllysine; alternate. Lysine 299 is subject to N6-acetyllysine. Position 333 is an N6-acetyllysine; alternate (lysine 333). The residue at position 333 (lysine 333) is an N6-succinyllysine; alternate. N6-acetyllysine is present on residues lysine 349 and lysine 362. Cysteine 459 acts as the Proton donor/acceptor in catalysis.

This sequence belongs to the thiolase-like superfamily. Thiolase family. As to quaternary structure, heterotetramer of 2 alpha/HADHA and 2 beta/HADHB subunits; forms the mitochondrial trifunctional enzyme. Also purified as higher order heterooligomers including a 4 alpha/HADHA and 4 beta/HADHB heterooligomer which physiological significance remains unclear. The mitochondrial trifunctional enzyme interacts with MTLN. Interacts with RSAD2/viperin.

The protein resides in the mitochondrion. The protein localises to the mitochondrion inner membrane. It localises to the mitochondrion outer membrane. It is found in the endoplasmic reticulum. It catalyses the reaction an acyl-CoA + acetyl-CoA = a 3-oxoacyl-CoA + CoA. It carries out the reaction butanoyl-CoA + acetyl-CoA = 3-oxohexanoyl-CoA + CoA. The enzyme catalyses hexanoyl-CoA + acetyl-CoA = 3-oxooctanoyl-CoA + CoA. The catalysed reaction is octanoyl-CoA + acetyl-CoA = 3-oxodecanoyl-CoA + CoA. It catalyses the reaction decanoyl-CoA + acetyl-CoA = 3-oxododecanoyl-CoA + CoA. It carries out the reaction dodecanoyl-CoA + acetyl-CoA = 3-oxotetradecanoyl-CoA + CoA. The enzyme catalyses tetradecanoyl-CoA + acetyl-CoA = 3-oxohexadecanoyl-CoA + CoA. It functions in the pathway lipid metabolism; fatty acid beta-oxidation. In terms of biological role, mitochondrial trifunctional enzyme catalyzes the last three of the four reactions of the mitochondrial beta-oxidation pathway. The mitochondrial beta-oxidation pathway is the major energy-producing process in tissues and is performed through four consecutive reactions breaking down fatty acids into acetyl-CoA. Among the enzymes involved in this pathway, the trifunctional enzyme exhibits specificity for long-chain fatty acids. Mitochondrial trifunctional enzyme is a heterotetrameric complex composed of two proteins, the trifunctional enzyme subunit alpha/HADHA carries the 2,3-enoyl-CoA hydratase and the 3-hydroxyacyl-CoA dehydrogenase activities, while the trifunctional enzyme subunit beta/HADHB described here bears the 3-ketoacyl-CoA thiolase activity. In Pan troglodytes (Chimpanzee), this protein is Trifunctional enzyme subunit beta, mitochondrial (HADHB).